The chain runs to 302 residues: Short-chain dehydrogenase/reductase 3 (302 aa).

4 helical membrane-spanning segments follow: residues 9–29 (LVVFPLQMIYLVVKAAVGLVL), 170–190 (IVCLNSVLALSAIPGAIDYCT), 195–215 (AFAFMESLTLGLLDCPGVSAT), and 253–273 (AVQLNQALLLLPWTMHALIIL). Ser-175 contributes to the substrate binding site. Tyr-188 (proton acceptor) is an active-site residue.

Belongs to the short-chain dehydrogenases/reductases (SDR) family. In terms of tissue distribution, in the retina, expressed in cone but not rod outer segments.

The protein resides in the membrane. The catalysed reaction is all-trans-retinol + NADP(+) = all-trans-retinal + NADPH + H(+). Catalyzes the reduction of all-trans-retinal to all-trans-retinol in the presence of NADPH. This Bos taurus (Bovine) protein is Short-chain dehydrogenase/reductase 3 (DHRS3).